Here is a 525-residue protein sequence, read N- to C-terminus: Histidine-rich glycoprotein (525 aa).

An N-terminal signal peptide occupies residues 1–18; sequence MKALIAALLLITLQYSCA. Cystatin domains lie at 19 to 136 and 137 to 254; these read VSPT…SALA and NTKD…NING. Cystine bridges form between C24–C504, C78–C89, C105–C126, C203–C417, and C218–C241. Residues 41–84 are interaction with ATP5F1A; that stretch reads RRRDGYLFQLLRIADAHLDRVENTTVYYLVLDVQESDCSVLSRK. An N-linked (GlcNAc...) asparagine glycan is attached at N63. N125 carries an N-linked (GlcNAc...) asparagine glycan. The interval 252–407 is disordered; the sequence is INGVPPHLGH…GHHPHGHHPH (156 aa). Over residues 284–293 the composition is skewed to basic residues; it reads RDHHHPHKPH. Residues 310–320 are compositionally biased toward pro residues; sequence PPLPQGPPPLL. Over residues 323 to 348 the composition is skewed to polar residues; the sequence is SCSSCQHATFGTNGAQRHSHNNNSSD. Residues N344 and N345 are each glycosylated (N-linked (GlcNAc...) asparagine). The segment at 348–382 is necessary for endothelial cell focal adhesions and anti-angiogenic activities; sequence DLHPHKHHSHEQHPHGHHPHAHHPHEHDTHRQHPH. 2 stretches are compositionally biased toward basic residues: residues 351–371 and 379–407; these read PHKH…AHHP and QHPH…HHPH.

In terms of assembly, interacts (via the HRR domain) with TPM1; the interaction appears to contribute to the antiangiogenic properties of the HRR domain. Interacts with THBS2; the interaction blocks the antiangiogenic effect of THBS2 with CD36. Interacts with THBS1 (via the TSP type I repeats); the interaction blocks the antiangiogenic effect of THBS1 with CD3. Interacts with PLG (via its Kringle domains); the interaction tethers PLG to the cell surface and enhances its activation. Interacts with HPSE; the interaction is enhanced at acidic pH, partially inhibits binding of HPSE to cell surface receptors and modulates its enzymatic activity. Interacts (via the HRR domain) with TMP1; the interaction partially mediates the antiangiogenic properties of HRG. Interacts with kappa and lambda light chains of IgG molecules. Interacts with ATP5F1A; the interaction occurs on the surface of T-cells and alters their cell morphology in concert with CONA. Binds IgG molecules containing kappa and lambda light chains and inhibits the formation of insoluble immunoglobulin complexes. Interacts with F12; the interaction, which is enhanced in the presence of zinc ions and inhibited by heparin-binding to HRG, inhibits factor XII autoactivation and contact-initiated coagulation. Zn(2+) is required as a cofactor. Proteolytic cleavage produces several HRG fragments which are mostly disulfide-linked and, therefore, not released. Cleavage by plasmin is inhibited in the presence of heparin, zinc ions or in an acidic environment. Cleavage reduces binding of HRG to heparan sulfate, but enhances the ability of HRG to bind and tether plasminogen to the cell surface. On platelet activation, releases a 33 kDa antiangiogenic peptide which encompasses the HRR. Also cleaved in the C-terminal by plasmin. In terms of processing, N-glycosylated. In terms of tissue distribution, expressed in macrophages and in malignant cells. Expressed by the liver and secreted in plasma (at protein level).

It is found in the secreted. In terms of biological role, plasma glycoprotein that binds a number of ligands such as heme, heparin, heparan sulfate, thrombospondin, plasminogen, and divalent metal ions. Binds heparin and heparin/glycosaminoglycans in a zinc-dependent manner. Binds heparan sulfate on the surface of liver, lung, kidney and heart endothelial cells. Binds to N-sulfated polysaccharide chains on the surface of liver endothelial cells. Inhibits rosette formation. Acts as an adapter protein and is implicated in regulating many processes such as immune complex and pathogen clearance, cell chemotaxis, cell adhesion, angiogenesis, coagulation and fibrinolysis. Mediates clearance of necrotic cells through enhancing the phagocytosis of necrotic cells in a heparan sulfate-dependent pathway. This process can be regulated by the presence of certain HRG ligands such as heparin and zinc ions. Binds to IgG subclasses of immunoglobins containing kappa and lambda light chains with different affinities regulating their clearance and inhibiting the formation of insoluble immune complexes. Tethers plasminogen to the cell surface. Binds T-cells and alters the cell morphology. Modulates angiogenesis by blocking the CD6-mediated antiangiongenic effect of thrombospondins, THBS1 and THBS2. Acts as a regulator of the vascular endothelial growth factor (VEGF) signaling pathway; inhibits endothelial cell motility by reducing VEGF-induced complex formation between PXN/paxillin and ILK/integrin-linked protein kinase and by promoting inhibition of VEGF-induced tyrosine phosphorylation of focal adhesion kinases and alpha-actinins in endothelial cells. Also plays a role in the regulation of tumor angiogenesis and tumor immune surveillance. Normalizes tumor vessels and promotes antitumor immunity by polarizing tumor-associated macrophages, leading to decreased tumor growth and metastasis. The chain is Histidine-rich glycoprotein (HRG) from Homo sapiens (Human).